We begin with the raw amino-acid sequence, 348 residues long: Sesquiterpene synthase MGU_11447 (348 aa).

Residues D91 and D96 each contribute to the Mg(2+) site. The DDXXXD motif signature appears at 91 to 96 (DDLFVD). Substrate is bound at residue R184. Mg(2+)-binding residues include N230, S234, and E238.

It belongs to the terpene synthase family. The cofactor is Mg(2+).

The catalysed reaction is (2E,6E)-farnesyl diphosphate + H2O = (+)-corvol ether B + diphosphate. The enzyme catalyses (2E,6E)-farnesyl diphosphate + H2O = (+)-corvol ether A + diphosphate. Functionally, terpene synthase that catalyzes the conversion of (2E,6E)-farnesyl diphosphate (FPP) into sesquiterpenes which are important for fungi-environment interactions. Produces a mixture consisting of 8 sesquiterpenes including corvol ethers A and B, as well as traces of epizonarene, gamma-cadinene, delta-cadinene, alpha-cadinene, alpha-cadinol, and an unidentified sesquiterpene. Produces both corvol ether A and corvol ether B in similar concentrations. The polypeptide is Sesquiterpene synthase MGU_11447 (Metarhizium guizhouense (strain ARSEF 977)).